Reading from the N-terminus, the 295-residue chain is Polyadenylate-binding protein 2-B (295 aa).

The interval 1-102 is disordered; sequence MAAVSSVASL…EEPGELTGDQ (102 aa). Gly residues-rich tracts occupy residues 19-31 and 71-81; these read LRGG…GGQD and GRGGSGGGAGG. The segment covering 83–96 has biased composition (acidic residues); it reads EELEDEELEEEEPG. The stretch at 106–140 forms a coiled coil; sequence DPELEAIKARVREMEEEAEKLKELQNEVEKQMNMS. Residues 145–295 form a necessary for homooligomerization region; it reads NAGPVIMSVE…ARATSWYTPY (151 aa). One can recognise an RRM domain in the interval 162-239; sequence RSIYVGNVDY…RQIKVVPKRT (78 aa).

Monomer and homooligomer. Binds RNA as a monomer and oligomerizes when bound to poly(A).

It localises to the nucleus. Its subcellular location is the cytoplasm. Involved in the 3'-end formation of mRNA precursors (pre-mRNA) by the addition of a poly(A) tail of 200-250 nt to the upstream cleavage product. Stimulates poly(A) polymerase (PAPOLA) conferring processivity on the poly(A) tail elongation reaction and also controls the poly(A) tail length. Increases the affinity of poly(A) polymerase for RNA. Binds to poly(A) and to poly(G) with high affinity. May protect the poly(A) tail from degradation. The chain is Polyadenylate-binding protein 2-B (pabpn1-b) from Xenopus laevis (African clawed frog).